Reading from the N-terminus, the 657-residue chain is Glycogen debranching enzyme (657 aa).

Catalysis depends on Asp-336, which acts as the Nucleophile. Residue Glu-371 is the Proton donor of the active site. The interval 460–479 is disordered; sequence ANGEENRDGTNNNYSNNHGK.

It belongs to the glycosyl hydrolase 13 family.

The enzyme catalyses Hydrolysis of (1-&gt;6)-alpha-D-glucosidic linkages to branches with degrees of polymerization of three or four glucose residues in limit dextrin.. It participates in glycan degradation; glycogen degradation. In terms of biological role, removes maltotriose and maltotetraose chains that are attached by 1,6-alpha-linkage to the limit dextrin main chain, generating a debranched limit dextrin. The polypeptide is Glycogen debranching enzyme (Escherichia coli O17:K52:H18 (strain UMN026 / ExPEC)).